The primary structure comprises 255 residues: 5'-nucleotidase SurE (255 aa).

Residues Asp-13, Asp-14, Ser-44, and Asn-100 each coordinate a divalent metal cation.

It belongs to the SurE nucleotidase family. A divalent metal cation serves as cofactor.

The protein resides in the cytoplasm. The catalysed reaction is a ribonucleoside 5'-phosphate + H2O = a ribonucleoside + phosphate. Its function is as follows. Nucleotidase that shows phosphatase activity on nucleoside 5'-monophosphates. The sequence is that of 5'-nucleotidase SurE from Bacteroides fragilis (strain ATCC 25285 / DSM 2151 / CCUG 4856 / JCM 11019 / LMG 10263 / NCTC 9343 / Onslow / VPI 2553 / EN-2).